A 512-amino-acid chain; its full sequence is Protein singed (512 aa).

This sequence belongs to the fascin family. As to quaternary structure, interacts with Rab35, with stronger binding to the Rab35-GTP form compared to the Rab35-GDP form.

It localises to the cytoplasm. Its subcellular location is the cytoskeleton. In terms of biological role, acts as an actin bundling protein. May have a role in the asymmetric organization and/or movement of cytoplasmic components. It has a role in somatic cells during the formation of adult bristles and hairs, and in the female germline during oogenesis. This is Protein singed (sn) from Drosophila melanogaster (Fruit fly).